Here is a 346-residue protein sequence, read N- to C-terminus: N-acetyl-gamma-glutamyl-phosphate reductase (346 aa).

C149 is a catalytic residue.

Belongs to the NAGSA dehydrogenase family. Type 1 subfamily.

It is found in the cytoplasm. It catalyses the reaction N-acetyl-L-glutamate 5-semialdehyde + phosphate + NADP(+) = N-acetyl-L-glutamyl 5-phosphate + NADPH + H(+). It functions in the pathway amino-acid biosynthesis; L-arginine biosynthesis; N(2)-acetyl-L-ornithine from L-glutamate: step 3/4. Its function is as follows. Catalyzes the NADPH-dependent reduction of N-acetyl-5-glutamyl phosphate to yield N-acetyl-L-glutamate 5-semialdehyde. In Desulfotalea psychrophila (strain LSv54 / DSM 12343), this protein is N-acetyl-gamma-glutamyl-phosphate reductase.